The sequence spans 362 residues: MRVLAAMSGGVDSAVAAARAVEAGHEVVGVHLALSAKPGTLRTGARGCCTIEDSHDARRAADILGIPFYVWDFAERFTEEVIETFVGEYAAGRTPNPCLTCNEKIKFEALLEKAMALGFDAVCTGHYARLTVEDGVPVLRRSRDEGKDQSYVLASLTAEQLGHSMFPLGDSLKSQVRQEAAERGLAVAKKPDSHDICFIPDGDTKKFLESKLGQKPGQLVDAETGAVLGEHTGVHGFTVGQRKGLGIDAPAPDGRPRYVLSLEPVSGTVKVGSADHLGVTEIDAKRPIWPSQRELDGPTECVVQVRAHGGTADAVAEVADGGMSIRLRRPLRGVAPGQAVVLYRPEEEGDLVLGSALIAATR.

ATP is bound by residues 6 to 13 (AMSGGVDS) and leucine 32. The active-site Nucleophile is cysteine 101. Cysteines 101 and 197 form a disulfide. An ATP-binding site is contributed by glycine 125. Residues 147 to 149 (KDQ) form an interaction with tRNA region. Cysteine 197 functions as the Cysteine persulfide intermediate in the catalytic mechanism.

It belongs to the MnmA/TRMU family.

It localises to the cytoplasm. It carries out the reaction S-sulfanyl-L-cysteinyl-[protein] + uridine(34) in tRNA + AH2 + ATP = 2-thiouridine(34) in tRNA + L-cysteinyl-[protein] + A + AMP + diphosphate + H(+). In terms of biological role, catalyzes the 2-thiolation of uridine at the wobble position (U34) of tRNA, leading to the formation of s(2)U34. This Saccharopolyspora erythraea (strain ATCC 11635 / DSM 40517 / JCM 4748 / NBRC 13426 / NCIMB 8594 / NRRL 2338) protein is tRNA-specific 2-thiouridylase MnmA.